The primary structure comprises 145 residues: 5-hydroxymethyl-dUMP N-hydrolase (145 aa).

G7, I9, R10, G11, S79, G81, E85, and S109 together coordinate 5-hydroxymethyl-dUMP.

It belongs to the 2'-deoxynucleoside 5'-phosphate N-hydrolase 1 family. As to quaternary structure, monomer and homodimer.

Its subcellular location is the cytoplasm. It localises to the nucleus. The enzyme catalyses 5-hydroxymethyl-dUMP + H2O = 5-hydroxymethyluracil + 2-deoxy-D-ribose 5-phosphate. Part of a nucleotide salvage pathway that eliminates epigenetically modified 5-hydroxymethyl-dCMP (hmdCMP) in a two-step process entailing deamination to cytotoxic 5-hydroxymethyl-dUMP (hmdUMP), followed by its hydrolysis into 5-hydroxymethyluracil (hmU) and 2-deoxy-D-ribose 5-phosphate (deoxyribosephosphate). Catalyzes the second step in that pathway, the hydrolysis of the N-glycosidic bond in hmdUMP, degrading this cytotoxic nucleotide to avoid its genomic integration. The chain is 5-hydroxymethyl-dUMP N-hydrolase from Esox lucius (Northern pike).